Reading from the N-terminus, the 264-residue chain is MKKISIHDLMKWKQEGKKFATVTAYDASFAQLFEQQEVPVLLVGDSLGMVLQGKSDTLPVTTEEIAYHTRCVRAGSPNSLVMADMPFMSYATPEQACENAGKLMQAGANMVKIEGGEWIAETVRILAERAVPVCAHLGLTPQSVNIFGGFRIQGRDEAKAEQMVKDALTLEAAGAQIILLECVPASLAERITKACTVPVIGIGAGNATDGQILVMHDMFGISANYMPKFSKNFLAETGDMRKAVTKYIQDVEQGTFPAAEHTFN.

Mg(2+)-binding residues include D45 and D84. Residues 45–46 (DS), D84, and K112 contribute to the 3-methyl-2-oxobutanoate site. E114 is a Mg(2+) binding site. The Proton acceptor role is filled by E181.

It belongs to the PanB family. Homodecamer; pentamer of dimers. Mg(2+) serves as cofactor.

The protein resides in the cytoplasm. The catalysed reaction is 3-methyl-2-oxobutanoate + (6R)-5,10-methylene-5,6,7,8-tetrahydrofolate + H2O = 2-dehydropantoate + (6S)-5,6,7,8-tetrahydrofolate. The protein operates within cofactor biosynthesis; (R)-pantothenate biosynthesis; (R)-pantoate from 3-methyl-2-oxobutanoate: step 1/2. Catalyzes the reversible reaction in which hydroxymethyl group from 5,10-methylenetetrahydrofolate is transferred onto alpha-ketoisovalerate to form ketopantoate. The sequence is that of 3-methyl-2-oxobutanoate hydroxymethyltransferase from Aliivibrio fischeri (strain MJ11) (Vibrio fischeri).